Here is a 119-residue protein sequence, read N- to C-terminus: Large ribosomal subunit protein P3z (119 aa).

A compositionally biased stretch (gly residues) spans 79-90 (AGGAASSGGGAG). A disordered region spans residues 79–119 (AGGAASSGGGAGEAAAAPKEDEKKKEESEEEEGDFGFDLFG). Basic and acidic residues predominate over residues 96–105 (PKEDEKKKEE).

It belongs to the eukaryotic ribosomal protein P1/P2 family. Post-translationally, phosphorylated.

Plays an important role in the elongation step of protein synthesis. The sequence is that of Large ribosomal subunit protein P3z (RPP3A) from Arabidopsis thaliana (Mouse-ear cress).